The sequence spans 195 residues: Protein GrpE (195 aa).

This sequence belongs to the GrpE family. As to quaternary structure, homodimer.

It is found in the cytoplasm. Functionally, participates actively in the response to hyperosmotic and heat shock by preventing the aggregation of stress-denatured proteins, in association with DnaK and GrpE. It is the nucleotide exchange factor for DnaK and may function as a thermosensor. Unfolded proteins bind initially to DnaJ; upon interaction with the DnaJ-bound protein, DnaK hydrolyzes its bound ATP, resulting in the formation of a stable complex. GrpE releases ADP from DnaK; ATP binding to DnaK triggers the release of the substrate protein, thus completing the reaction cycle. Several rounds of ATP-dependent interactions between DnaJ, DnaK and GrpE are required for fully efficient folding. This Francisella tularensis subsp. holarctica (strain OSU18) protein is Protein GrpE.